Reading from the N-terminus, the 84-residue chain is Toxin Cex12 (84 aa).

Residues 1 to 19 form the signal peptide; that stretch reads MNSLLMITTCLILVGTVWA. The region spanning 20–83 is the LCN-type CS-alpha/beta domain; the sequence is NDGYLFDKRK…ISRTPGKTCR (64 aa). 4 cysteine pairs are disulfide-bonded: Cys31–Cys82, Cys35–Cys58, Cys44–Cys63, and Cys48–Cys65.

It belongs to the long (4 C-C) scorpion toxin superfamily. Sodium channel inhibitor family. Beta subfamily. As to expression, expressed by the venom gland.

The protein resides in the secreted. In terms of biological role, beta toxins bind voltage-independently at site-4 of sodium channels (Nav) and shift the voltage of activation toward more negative potentials thereby affecting sodium channel activation and promoting spontaneous and repetitive firing. This is Toxin Cex12 from Centruroides exilicauda (Bark scorpion).